A 2623-amino-acid chain; its full sequence is Immunoglobulin superfamily member 10 (2623 aa).

An N-terminal signal peptide occupies residues 1–28; sequence MKVKGRGITCLLVSFAVICLVATPGGKA. The region spanning 29-56 is the LRRNT domain; that stretch reads CPRRCACYMPTEVHCTFRYLTSIPDSIP. LRR repeat units lie at residues 58–79, 82–103, 106–127, 130–151, 154–175, and 186–207; these read NVER…DFSG, KLEL…TFSD, ALQV…TFYG, SLTR…VFYG, FLRL…TFVS, and FIKF…MVSY. Residues 219-281 enclose the LRRCT domain; it reads NPWTCDCHLK…VSAAAFQCAK (63 aa). Residues Asn-319 and Asn-439 are each glycosylated (N-linked (GlcNAc...) asparagine). Ig-like C2-type domains are found at residues 461-567 and 571-661; these read PRAE…YRIT and PLVE…FQVS. 2 cysteine pairs are disulfide-bonded: Cys-497/Cys-551 and Cys-595/Cys-645. N-linked (GlcNAc...) asparagine glycosylation occurs at Asn-627. Disordered regions lie at residues 668–692 and 767–788; these read RPLE…HLKE and AMPD…QLPN. Residues Asn-774 and Asn-999 are each glycosylated (N-linked (GlcNAc...) asparagine). Disordered regions lie at residues 1334–1376 and 1434–1453; these read TQTE…AMTP and STIA…TTTR. Basic and acidic residues predominate over residues 1335–1356; that stretch reads QTERSRAQTIQREQEPQKKNRT. The segment covering 1357-1373 has biased composition (polar residues); sequence DPNISPDQSSGFTTPTA. Ig-like C2-type domains follow at residues 1648-1739, 1745-1836, 1841-1933, 1941-2034, 2037-2135, 2141-2229, 2234-2331, 2337-2427, 2432-2518, and 2528-2623; these read PRIV…VTLS, PRIL…VKIQ, PPVI…VMLT, PRIE…VSLR, PAKI…VHLT, PRIR…YKLD, PPLI…LEVL, PTFR…VILE, PVIL…TLIT, and PRIT…IQVI. Disulfide bonds link Cys-1670/Cys-1723, Cys-1767/Cys-1820, and Cys-1864/Cys-1917. Asn-1899 and Asn-1962 each carry an N-linked (GlcNAc...) asparagine glycan. 7 disulfides stabilise this stretch: Cys-1963-Cys-2016, Cys-2060-Cys-2119, Cys-2163-Cys-2213, Cys-2261-Cys-2313, Cys-2359-Cys-2411, Cys-2454-Cys-2506, and Cys-2550-Cys-2605. The N-linked (GlcNAc...) asparagine glycan is linked to Asn-2101. The residue at position 2603 (Tyr-2603) is a Phosphotyrosine.

It is found in the secreted. In terms of biological role, involved in the control of early migration of neurons expressing gonadotropin-releasing hormone (GNRH neurons). May be involved in the maintenance of osteochondroprogenitor cells pool. The chain is Immunoglobulin superfamily member 10 (IGSF10) from Homo sapiens (Human).